A 152-amino-acid chain; its full sequence is Siroheme decarboxylase beta subunit (152 aa).

Belongs to the Ahb/Nir family. In terms of assembly, forms a heterodimer composed of AhbA and AhbB.

It carries out the reaction siroheme + 2 H(+) = 12,18-didecarboxysiroheme + 2 CO2. The protein operates within porphyrin-containing compound metabolism; protoheme biosynthesis. Binds heme b. The redox state of the heme b modulates the activity of the enzyme. Activity is stimulated by sodium dithionite. Its function is as follows. Involved in siroheme-dependent heme b biosynthesis. Catalyzes the decarboxylation of siroheme into didecarboxysiroheme. This Methanosarcina barkeri (strain Fusaro / DSM 804) protein is Siroheme decarboxylase beta subunit.